We begin with the raw amino-acid sequence, 525 residues long: Lysine--tRNA ligase (525 aa).

A 'HIGH' region motif is present at residues 44–52; it reads PSGLPHIGT. The 'KMSKS' region signature appears at 290–294; that stretch reads KISKS. ATP is bound at residue Lys-293.

It belongs to the class-I aminoacyl-tRNA synthetase family.

It is found in the cytoplasm. The catalysed reaction is tRNA(Lys) + L-lysine + ATP = L-lysyl-tRNA(Lys) + AMP + diphosphate. This chain is Lysine--tRNA ligase, found in Rickettsia felis (strain ATCC VR-1525 / URRWXCal2) (Rickettsia azadi).